The chain runs to 100 residues: NADH-quinone oxidoreductase subunit K (100 aa).

Helical transmembrane passes span 4 to 24, 29 to 49, and 60 to 80; these read LSYS…GIMI, LFLL…FVIV, and VMYI…LALL.

This sequence belongs to the complex I subunit 4L family. As to quaternary structure, NDH-1 is composed of 14 different subunits. Subunits NuoA, H, J, K, L, M, N constitute the membrane sector of the complex.

Its subcellular location is the cell membrane. The catalysed reaction is a quinone + NADH + 5 H(+)(in) = a quinol + NAD(+) + 4 H(+)(out). Functionally, NDH-1 shuttles electrons from NADH, via FMN and iron-sulfur (Fe-S) centers, to quinones in the respiratory chain. The immediate electron acceptor for the enzyme in this species is believed to be ubiquinone. Couples the redox reaction to proton translocation (for every two electrons transferred, four hydrogen ions are translocated across the cytoplasmic membrane), and thus conserves the redox energy in a proton gradient. In Baumannia cicadellinicola subsp. Homalodisca coagulata, this protein is NADH-quinone oxidoreductase subunit K.